The primary structure comprises 182 residues: Ribulose bisphosphate carboxylase small subunit, chloroplastic (182 aa).

Residues 1–58 (MASSMLSTATVASINRVSPAQATMVAPFTGLKSTPVFPTTRKTNSDITSITSNGGKVQ) constitute a chloroplast transit peptide.

The protein belongs to the RuBisCO small chain family. In terms of assembly, heterohexadecamer of 8 large and 8 small subunits.

It is found in the plastid. Its subcellular location is the chloroplast. RuBisCO catalyzes two reactions: the carboxylation of D-ribulose 1,5-bisphosphate, the primary event in carbon dioxide fixation, as well as the oxidative fragmentation of the pentose substrate. Both reactions occur simultaneously and in competition at the same active site. Although the small subunit is not catalytic it is essential for maximal activity. This Manihot esculenta (Cassava) protein is Ribulose bisphosphate carboxylase small subunit, chloroplastic.